Reading from the N-terminus, the 322-residue chain is Arginase-1 (322 aa).

An N6-succinyllysine modification is found at K17. Phosphoserine is present on residues S62 and S72. At K75 the chain carries N6-succinyllysine. Residues H101, D124, H126, and D128 each contribute to the Mn(2+) site. Substrate is bound by residues H126–N130 and S137–N139. S163 bears the Phosphoserine mark. D183 is a binding site for substrate. S217 bears the Phosphoserine mark. D232 and D234 together coordinate Mn(2+). Substrate is bound by residues T246 and E277.

This sequence belongs to the arginase family. In terms of assembly, homotrimer. Interacts with CMTM6. It depends on Mn(2+) as a cofactor. In terms of tissue distribution, within the immune system initially reported to be selectively expressed in granulocytes (polymorphonuclear leukocytes [PMNs]). Also detected in macrophages mycobacterial granulomas. Expressed in group2 innate lymphoid cells (ILC2s) during lung disease.

The protein localises to the cytoplasm. The protein resides in the cytoplasmic granule. It catalyses the reaction L-arginine + H2O = urea + L-ornithine. Its pathway is nitrogen metabolism; urea cycle; L-ornithine and urea from L-arginine: step 1/1. Its function is as follows. Key element of the urea cycle converting L-arginine to urea and L-ornithine, which is further metabolized into metabolites proline and polyamides that drive collagen synthesis and bioenergetic pathways critical for cell proliferation, respectively; the urea cycle takes place primarily in the liver and, to a lesser extent, in the kidneys. Functions in L-arginine homeostasis in nonhepatic tissues characterized by the competition between nitric oxide synthase (NOS) and arginase for the available intracellular substrate arginine. Arginine metabolism is a critical regulator of innate and adaptive immune responses. Involved in an antimicrobial effector pathway in polymorphonuclear granulocytes (PMN). Upon PMN cell death is liberated from the phagolysosome and depletes arginine in the microenvironment leading to suppressed T cell and natural killer (NK) cell proliferation and cytokine secretion. In group 2 innate lymphoid cells (ILC2s) promotes acute type 2 inflammation in the lung and is involved in optimal ILC2 proliferation but not survival. In humans, the immunological role in the monocytic/macrophage/dendritic cell (DC) lineage is unsure. The polypeptide is Arginase-1 (ARG1) (Homo sapiens (Human)).